A 480-amino-acid polypeptide reads, in one-letter code: Sestrin-2 (480 aa).

Met-1 is subject to N-acetylmethionine. Positions Arg-20 to Gly-43 are disordered. A compositionally biased stretch (basic and acidic residues) spans Glu-27–Ala-37. Residues Gly-66–Thr-239 form an N-terminal domain; mediates the alkylhydroperoxide reductase activity region. Cys-125 acts as the Cysteine sulfenic acid (-SOH) intermediate in catalysis. Residue Lys-175 forms a Glycyl lysine isopeptide (Lys-Gly) (interchain with G-Cter in ubiquitin) linkage. 2 disordered regions span residues Asp-221–Gly-251 and Leu-272–Lys-291. Residues Glu-223–Gly-238 are compositionally biased toward low complexity. Residue Ser-249 is modified to Phosphoserine. The tract at residues Pro-308–Thr-480 is C-terminal domain; mediates TORC1 regulation. Residues Thr-374 to Thr-377, Thr-386, and Glu-451 contribute to the L-leucine site.

This sequence belongs to the sestrin family. As to quaternary structure, interacts with the GATOR2 complex which is composed of MIOS, SEC13, SEH1L, WDR24 and WDR59; the interaction is negatively regulated by leucine. Conveys leucine availability via direct interaction with SEH1L and WDR24 components of the GATOR2 complex. Interacts with RRAGA, RRAGB, RRAGC and RRAGD; may function as a guanine nucleotide dissociation inhibitor for RRAGs and regulate them. May interact with the TORC2 complex. Interacts with KEAP1, RBX1, SQSTM and ULK1; to regulate the degradation of KEAP1. May also associate with the complex composed of TSC1, TSC2 and the AMP-responsive protein kinase/AMPK to regulate TORC1 signaling. May interact with PRDX1. Post-translationally, phosphorylated by ULK1 at multiple sites. Ubiquitinated at Lys-175 by RNF167 via 'Lys-63'-linked polyubiquitination in response to leucine deprivation: ubiquitination promotes SESN2-interaction with the GATOR2 complex, leading to inhibit the TORC1 signaling pathway. Deubiquitinated at Lys-175 by STAMBPL1, promoting the TORC1 signaling pathway. Ubiquitinated by RNF186; ubiquitination mediates proteasomal degradation. As to expression, detected in heart, liver and skeletal muscles (at protein level).

The protein localises to the cytoplasm. The enzyme catalyses a hydroperoxide + L-cysteinyl-[protein] = S-hydroxy-L-cysteinyl-[protein] + an alcohol. Functions as an intracellular leucine sensor that negatively regulates the mTORC1 signaling pathway through the GATOR complex. In absence of leucine, binds the GATOR subcomplex GATOR2 and prevents mTORC1 signaling. Binding of leucine to SESN2 disrupts its interaction with GATOR2 thereby activating the TORC1 signaling pathway. This stress-inducible metabolic regulator also plays a role in protection against oxidative and genotoxic stresses. May negatively regulate protein translation in response to endoplasmic reticulum stress, via mTORC1. May positively regulate the transcription by NFE2L2 of genes involved in the response to oxidative stress by facilitating the SQSTM1-mediated autophagic degradation of KEAP1. May also mediate TP53 inhibition of TORC1 signaling upon genotoxic stress. Moreover, may prevent the accumulation of reactive oxygen species (ROS) through the alkylhydroperoxide reductase activity born by the N-terminal domain of the protein. Was originally reported to contribute to oxidative stress resistance by reducing PRDX1. However, this could not be confirmed. This chain is Sestrin-2, found in Mus musculus (Mouse).